Consider the following 162-residue polypeptide: 2-C-methyl-D-erythritol 2,4-cyclodiphosphate synthase (162 aa).

Positions 12 and 14 each coordinate a divalent metal cation. 4-CDP-2-C-methyl-D-erythritol 2-phosphate is bound by residues 12–14 (DVH) and 38–39 (HS). Position 46 (histidine 46) interacts with a divalent metal cation. 4-CDP-2-C-methyl-D-erythritol 2-phosphate-binding positions include 60 to 62 (DIG), 65 to 69 (FPDTD), and arginine 146.

This sequence belongs to the IspF family. As to quaternary structure, homotrimer. Requires a divalent metal cation as cofactor.

The enzyme catalyses 4-CDP-2-C-methyl-D-erythritol 2-phosphate = 2-C-methyl-D-erythritol 2,4-cyclic diphosphate + CMP. Its pathway is isoprenoid biosynthesis; isopentenyl diphosphate biosynthesis via DXP pathway; isopentenyl diphosphate from 1-deoxy-D-xylulose 5-phosphate: step 4/6. Its function is as follows. Involved in the biosynthesis of isopentenyl diphosphate (IPP) and dimethylallyl diphosphate (DMAPP), two major building blocks of isoprenoid compounds. Catalyzes the conversion of 4-diphosphocytidyl-2-C-methyl-D-erythritol 2-phosphate (CDP-ME2P) to 2-C-methyl-D-erythritol 2,4-cyclodiphosphate (ME-CPP) with a corresponding release of cytidine 5-monophosphate (CMP). This chain is 2-C-methyl-D-erythritol 2,4-cyclodiphosphate synthase, found in Bordetella bronchiseptica (strain ATCC BAA-588 / NCTC 13252 / RB50) (Alcaligenes bronchisepticus).